Here is an 814-residue protein sequence, read N- to C-terminus: Rho GTPase-activating protein 44 (814 aa).

In terms of domain architecture, BAR spans 14–249 (QTVGRAEKTE…IKAQQEAWVE (236 aa)). The 191-residue stretch at 255–445 (KPLEEHLMIS…PIIQHADWFF (191 aa)) folds into the Rho-GAP domain. Disordered stretches follow at residues 467-493 (ANYSSMPSPDMDPADRRQPEQARRPLS), 531-768 (SAGR…SMST), and 784-814 (STLRLSPLEHARRHSVTDKRDSEEESESTAL). A compositionally biased stretch (basic and acidic residues) spans 479-489 (PADRRQPEQAR). At serine 493 the chain carries Phosphoserine. Composition is skewed to low complexity over residues 531 to 541 (SAGRKAACAPP), 567 to 581 (SPATPAPALSPSGAS), 598 to 612 (SPGSGQKGSPGSIQG), 622 to 637 (PQPAASPSQLPADQSP), 684 to 704 (SPYGLSYPPGYSMASGQLSPA), and 741 to 752 (SVSLSASSPQST). Residues 727–814 (KPRQRPTLPP…SEEESESTAL (88 aa)) are interaction with BST2. The segment covering 790 to 805 (PLEHARRHSVTDKRDS) has biased composition (basic and acidic residues). The residue at position 805 (serine 805) is a Phosphoserine. The PDZ-binding motif lies at 811–814 (STAL).

Interacts with BST2 (via cytoplasmic domain). Interacts (probably via PDZ-binding motif) with SHANK3 (via PDZ domain); the interaction takes place in dendritic spines and promotes GRIA1 exocytosis. In terms of tissue distribution, expressed in brain, detected at high levels in hippocampal CA1 (at protein level).

The protein resides in the cell projection. It localises to the dendritic spine. Its subcellular location is the recycling endosome. The protein localises to the presynapse. It is found in the dendrite. Its function is as follows. GTPase-activating protein (GAP) that stimulates the GTPase activity of Rho-type GTPases. Thereby, controls Rho-type GTPases cycling between their active GTP-bound and inactive GDP-bound states. Acts as a GAP at least for CDC42 and RAC1. In neurons, is involved in dendritic spine formation and synaptic plasticity in a specific RAC1-GAP activity. Limits the initiation of exploratory dendritic filopodia. Recruited to actin-patches that seed filopodia, binds specifically to plasma membrane sections that are deformed inward by acto-myosin mediated contractile forces. Acts through GAP activity on RAC1 to reduce actin polymerization necessary for filopodia formation. In association with SHANK3, promotes GRIA1 exocytosis from recycling endosomes and spine morphological changes associated to long-term potentiation. This is Rho GTPase-activating protein 44 from Rattus norvegicus (Rat).